The sequence spans 350 residues: GTPase Obg (350 aa).

Residues 1–159 (MKLVDEAEIL…RLLKLELKLL (159 aa)) form the Obg domain. Positions 160–337 (ADVGLLGFPN…IMKDVMAFFD (178 aa)) constitute an OBG-type G domain. GTP is bound by residues 166 to 173 (GFPNAGKS), 191 to 195 (FTTLY), 213 to 216 (DVPG), 287 to 290 (NKAD), and 318 to 320 (SAL). Mg(2+)-binding residues include S173 and T193.

This sequence belongs to the TRAFAC class OBG-HflX-like GTPase superfamily. OBG GTPase family. As to quaternary structure, monomer. Mg(2+) is required as a cofactor.

It is found in the cytoplasm. Its function is as follows. An essential GTPase which binds GTP, GDP and possibly (p)ppGpp with moderate affinity, with high nucleotide exchange rates and a fairly low GTP hydrolysis rate. Plays a role in control of the cell cycle, stress response, ribosome biogenesis and in those bacteria that undergo differentiation, in morphogenesis control. The protein is GTPase Obg of Xanthomonas campestris pv. campestris (strain 8004).